Consider the following 428-residue polypeptide: Glutamate-1-semialdehyde 2,1-aminomutase 1 (428 aa).

Lys-268 is modified (N6-(pyridoxal phosphate)lysine).

Belongs to the class-III pyridoxal-phosphate-dependent aminotransferase family. HemL subfamily. In terms of assembly, homodimer. Requires pyridoxal 5'-phosphate as cofactor.

It is found in the cytoplasm. It catalyses the reaction (S)-4-amino-5-oxopentanoate = 5-aminolevulinate. It functions in the pathway porphyrin-containing compound metabolism; protoporphyrin-IX biosynthesis; 5-aminolevulinate from L-glutamyl-tRNA(Glu): step 2/2. The protein is Glutamate-1-semialdehyde 2,1-aminomutase 1 of Geobacillus kaustophilus (strain HTA426).